The primary structure comprises 693 residues: Polyribonucleotide nucleotidyltransferase (693 aa).

Residues D489 and D495 each contribute to the Mg(2+) site. Residues 556–615 (PQIHVMNINPAKIKDVVGRGGATVKGIVEKTGAQIDTSDSGEVKVFAKDKKSMDMAVAMI) form the KH domain. Positions 625 to 693 (GQVYKGKIVK…GRVKLSLVAR (69 aa)) constitute an S1 motif domain.

Belongs to the polyribonucleotide nucleotidyltransferase family. In terms of assembly, component of the RNA degradosome, which is a multiprotein complex involved in RNA processing and mRNA degradation. The cofactor is Mg(2+).

The protein resides in the cytoplasm. It catalyses the reaction RNA(n+1) + phosphate = RNA(n) + a ribonucleoside 5'-diphosphate. Involved in mRNA degradation. Catalyzes the phosphorolysis of single-stranded polyribonucleotides processively in the 3'- to 5'-direction. The sequence is that of Polyribonucleotide nucleotidyltransferase from Francisella tularensis subsp. novicida (strain U112).